Consider the following 184-residue polypeptide: Large ribosomal subunit protein uL6 (184 aa).

This sequence belongs to the universal ribosomal protein uL6 family. Part of the 50S ribosomal subunit.

Functionally, this protein binds to the 23S rRNA, and is important in its secondary structure. It is located near the subunit interface in the base of the L7/L12 stalk, and near the tRNA binding site of the peptidyltransferase center. This chain is Large ribosomal subunit protein uL6, found in Pseudothermotoga lettingae (strain ATCC BAA-301 / DSM 14385 / NBRC 107922 / TMO) (Thermotoga lettingae).